The primary structure comprises 417 residues: Sulfate adenylyltransferase (417 aa).

Belongs to the sulfate adenylyltransferase family.

It catalyses the reaction sulfate + ATP + H(+) = adenosine 5'-phosphosulfate + diphosphate. Its pathway is sulfur metabolism; hydrogen sulfide biosynthesis; sulfite from sulfate: step 1/3. The protein is Sulfate adenylyltransferase of Psychrobacter cryohalolentis (strain ATCC BAA-1226 / DSM 17306 / VKM B-2378 / K5).